The sequence spans 89 residues: Small ribosomal subunit protein bS20 (89 aa).

The span at 1 to 12 shows a compositional bias: basic residues; it reads MANIKSAKKRAK. Residues 1-22 form a disordered region; it reads MANIKSAKKRAKQTIVRNERNT.

The protein belongs to the bacterial ribosomal protein bS20 family.

Functionally, binds directly to 16S ribosomal RNA. This is Small ribosomal subunit protein bS20 from Xanthomonas oryzae pv. oryzae (strain KACC10331 / KXO85).